The chain runs to 831 residues: Thymine dioxygenase JBP1-B (831 aa).

The interval Val80–Ala282 is thymine dioxygenase. Positions 207, 209, and 257 each coordinate Fe cation. Arg273 contributes to the 2-oxoglutarate binding site. The DNA-binding JBP1 domain stretch occupies residues Leu409 to Ala578.

It belongs to the TET family. JBP1 subfamily. In terms of assembly, monomer. Binds to DNA as a monomer. Requires Fe(2+) as cofactor.

It is found in the nucleus. The catalysed reaction is thymine + 2-oxoglutarate + O2 = 5-hydroxymethyluracil + succinate + CO2. Functionally, dioxygenase that catalyzes the first step of DNA base J (beta-d-glucosyl-HOMedU) biosynthesis by converting thymine to 5-hydroxymethyluracil (HOMedU). DNA base J is a hypermodified thymidine residue found in the genome of kinetoplastid parasites, which is localized primarily to repetitive DNA, namely the telomeres, and is implicated in the regulation of antigenic variation. Also specifically binds to base J-containing DNA (J-DNA). Involved in propagation and maintenance of DNA base J synthesis initiated by JBP2 by specifically binding already synthesized DNA base J and propagating J synthesis. Thymine dioxygenase activity and J-DNA-binding are independent functions. This Trypanosoma cruzi (strain CL Brener) protein is Thymine dioxygenase JBP1-B (JBP1B).